Consider the following 399-residue polypeptide: Inositol polyphosphate 1-phosphatase (399 aa).

Aspartate 54 serves as a coordination point for Li(+). Glutamate 79 serves as a coordination point for Mg(2+). Li(+) is bound at residue glutamate 80. 2 residues coordinate Mg(2+): aspartate 153 and isoleucine 155. Residues aspartate 156, serine 157, threonine 158, serine 267, lysine 269, glycine 289, alanine 290, lysine 293, and threonine 311 each coordinate 1D-myo-inositol 1,4-bisphosphate. Residue aspartate 316 coordinates Mg(2+). Phosphoserine is present on serine 317.

This sequence belongs to the inositol monophosphatase superfamily. In terms of assembly, monomer. Mg(2+) is required as a cofactor. As to expression, ubiquitously expressed, with highest levels in pancreas and kidney.

The enzyme catalyses 1D-myo-inositol 1,4-bisphosphate + H2O = 1D-myo-inositol 4-phosphate + phosphate. It carries out the reaction 1D-myo-inositol 1,3,4-trisphosphate + H2O = 1D-myo-inositol 3,4-bisphosphate + phosphate. Its pathway is signal transduction; phosphatidylinositol signaling pathway. With respect to regulation, inhibited by Li(+). Its function is as follows. Mg(2+)-dependent phosphatase that catalyzes the hydrolysis of the 1-position phosphate from inositol 1,4-bisphosphate and inositol 1,3,4-trisphosphate and participates in inositol phosphate metabolism. In Homo sapiens (Human), this protein is Inositol polyphosphate 1-phosphatase.